A 169-amino-acid polypeptide reads, in one-letter code: Caltractin (169 aa).

Positions 1–24 (MSYRKTVVSARRDQKKGRVGGLTE) are disordered. EF-hand domains follow at residues 25 to 60 (EQKQEIREAFDLFDTDGSGTIDAKELKVAMRALGFE), 61 to 96 (PKKEEIKKMIADIDKAGSGTIDFEEFLQMMTSKMGE), 98 to 133 (DSREEIIKAFKLFDDDNTGFITLKNLKRVAKELGEN), and 134 to 169 (LTDEELQEMTDEADRNGDGQIDEDEFYRIMKKTSLF). Ca(2+) contacts are provided by D38, D40, S42, T44, and E49. Positions 147, 149, 151, 153, and 158 each coordinate Ca(2+).

This sequence belongs to the centrin family.

This calcium-binding protein is found in the basal body complexes (the functional homolog of the centrosome in animal cell). In mitotic cells it is specifically associated with the poles of the mitotic spindles at the sites of the duplicated basal body complexes. The protein is Caltractin of Dunaliella salina (Green alga).